A 137-amino-acid polypeptide reads, in one-letter code: Small ribosomal subunit protein uS12 (137 aa).

Residues 1-57 (MPTINQLVRKPRKSKVEKSKSPALNVGYNSHKKVQTNVSSPQKRGVATRVGTMTPKK) are disordered. The residue at position 102 (Asp102) is a 3-methylthioaspartic acid.

The protein belongs to the universal ribosomal protein uS12 family. As to quaternary structure, part of the 30S ribosomal subunit. Contacts proteins S8 and S17. May interact with IF1 in the 30S initiation complex.

Functionally, with S4 and S5 plays an important role in translational accuracy. Its function is as follows. Interacts with and stabilizes bases of the 16S rRNA that are involved in tRNA selection in the A site and with the mRNA backbone. Located at the interface of the 30S and 50S subunits, it traverses the body of the 30S subunit contacting proteins on the other side and probably holding the rRNA structure together. The combined cluster of proteins S8, S12 and S17 appears to hold together the shoulder and platform of the 30S subunit. This is Small ribosomal subunit protein uS12 from Streptococcus sanguinis (strain SK36).